A 1081-amino-acid polypeptide reads, in one-letter code: Dyslexia-associated protein KIAA0319 homolog (1081 aa).

An N-terminal signal peptide occupies residues 1-22 (MVSPPGVLSSLLLLAAMAGGSS). One can recognise an MANSC domain in the interval 23 to 99 (QQCSEGRTYS…PRTTGPIRSY (77 aa)). Residues 23–964 (QQCSEGRTYS…WDGESNCEWS (942 aa)) lie on the Extracellular side of the membrane. Disordered regions lie at residues 141 to 160 (LPFLGKDGGPEETAEYSDDY), 168 to 216 (LQPS…DLTP), and 228 to 298 (NEST…TTVE). Composition is skewed to polar residues over residues 197–209 (ASATGDNSAASTE), 228–253 (NESTWSPTPRHSEMSSMWPSSVTASP), and 283–298 (HNPSPASLESSPTTVE). 5 PKD domains span residues 345–436 (AVSA…VMPA), 444–533 (VAIV…IRGS), 539–629 (VANA…VQAE), 630–723 (NNQA…VKKE), and 729–820 (RAQA…VLPD). N-linked (GlcNAc...) asparagine glycosylation is found at N430 and N522. The helical transmembrane segment at 965 to 985 (VFYVAALALTLTVLTGAVTWV) threads the bilayer. Residues 986-1081 (CICCCRRRKR…VSFGYYSKDR (96 aa)) lie on the Cytoplasmic side of the membrane. Positions 1004 to 1007 (YTIL) match the Endocytosis signal motif.

In terms of assembly, homodimer. Interacts with AP2M1; required for clathrin-mediated endocytosis. Post-translationally, N-glycosylated. O-glycosylated. In terms of processing, shedding of the extracellular domain and intramembrane cleavage produce several proteolytic products. The intramembrane cleavage releases a soluble cytoplasmic polypeptide that translocates to the nucleolus. As to expression, highly expressed during development in ventricular zone, intermediate zone, cortical plate, striatum, hippocampus, and brain stem.

It localises to the cell membrane. Its subcellular location is the early endosome membrane. Its function is as follows. Involved in neuronal migration during development of the cerebral neocortex. May function in a cell autonomous and a non-cell autonomous manner and play a role in appropriate adhesion between migrating neurons and radial glial fibers. May also regulate growth and differentiation of dendrites. The protein is Dyslexia-associated protein KIAA0319 homolog of Rattus norvegicus (Rat).